A 361-amino-acid chain; its full sequence is Tyrosine--tRNA ligase (361 aa).

The L-tyrosine site is built by tyrosine 36, tyrosine 162, glutamine 166, aspartate 169, and glutamine 184. Residues 236–240 (KMSKS) carry the 'KMSKS' region motif. Lysine 239 contributes to the ATP binding site.

Belongs to the class-I aminoacyl-tRNA synthetase family. TyrS type 4 subfamily. In terms of assembly, homodimer.

Its subcellular location is the cytoplasm. The catalysed reaction is tRNA(Tyr) + L-tyrosine + ATP = L-tyrosyl-tRNA(Tyr) + AMP + diphosphate + H(+). Functionally, catalyzes the attachment of tyrosine to tRNA(Tyr) in a two-step reaction: tyrosine is first activated by ATP to form Tyr-AMP and then transferred to the acceptor end of tRNA(Tyr). This is Tyrosine--tRNA ligase from Saccharolobus islandicus (strain M.14.25 / Kamchatka #1) (Sulfolobus islandicus).